A 183-amino-acid chain; its full sequence is Adenine phosphoribosyltransferase (183 aa).

This sequence belongs to the purine/pyrimidine phosphoribosyltransferase family. Homodimer.

It is found in the cytoplasm. It carries out the reaction AMP + diphosphate = 5-phospho-alpha-D-ribose 1-diphosphate + adenine. Its pathway is purine metabolism; AMP biosynthesis via salvage pathway; AMP from adenine: step 1/1. Functionally, catalyzes a salvage reaction resulting in the formation of AMP, that is energically less costly than de novo synthesis. The polypeptide is Adenine phosphoribosyltransferase (Salmonella arizonae (strain ATCC BAA-731 / CDC346-86 / RSK2980)).